Reading from the N-terminus, the 435-residue chain is uncharacterized protein (435 aa).

9 helical membrane-spanning segments follow: residues 40 to 60 (LVST…EAVF), 103 to 123 (VLWT…WLIL), 133 to 153 (IMLA…IYNP), 195 to 215 (LIHE…IIVL), 226 to 246 (ICTA…AVVG), 313 to 333 (VAVV…LFFV), 358 to 378 (LALP…AVDW), 381 to 401 (WWVM…IDRP), and 414 to 434 (VFVC…NNIG).

It is found in the cell membrane. This is an uncharacterized protein from Mycobacterium bovis (strain ATCC BAA-935 / AF2122/97).